Consider the following 141-residue polypeptide: MKAFLVICALTLTAVATQARTMDRCSLAREMSKLGVPRDQLAKWTCIAQHESSFRTGVVGPANSNGSNDYGIFQINNKYWCKPADGRFSYNECGLSCNALLTDDITNSVKCARKIQRQQGWTAWSTWKYCSGSLPSINSCF.

The N-terminal stretch at 1-18 (MKAFLVICALTLTAVATQ) is a signal peptide. Positions 20–141 (RTMDRCSLAR…GSLPSINSCF (122 aa)) constitute a C-type lysozyme domain. 4 disulfides stabilise this stretch: Cys-25-Cys-140, Cys-46-Cys-130, Cys-81-Cys-97, and Cys-93-Cys-111. Residues Glu-51 and Asp-69 contribute to the active site.

It belongs to the glycosyl hydrolase 22 family. In terms of tissue distribution, salivary gland.

It catalyses the reaction Hydrolysis of (1-&gt;4)-beta-linkages between N-acetylmuramic acid and N-acetyl-D-glucosamine residues in a peptidoglycan and between N-acetyl-D-glucosamine residues in chitodextrins.. Its function is as follows. Unlikely to play an active role in the humoral immune defense. May have a function in the digestion of bacteria in the food. This Drosophila melanogaster (Fruit fly) protein is Lysozyme P (LysP).